A 352-amino-acid polypeptide reads, in one-letter code: MPECWDGEHDIETPYGLLHVVIRGSPKGNRPAILTYHDVGLNHKLCFNTFFNFEDMQEITKHFVVCHVDAPGQQVGASQFPQGYQFPSMEQLAAMLPSVVQHFGFKYVIGIGVGAGAYVLAKFALIFPDLVEGLVLVNIDPNGKGWIDWAATKLSGLTSTLPDTVLSHLFSQEELVNNTELVQSYRQQIGNVVNQANLQLFWNMYNSRRDLDINRPGTVPNAKTLRCPVMLVVGDNAPAEDGVVECNSKLDPTTTTFLKMADSGGLPQVTQPGKLTEAFKYFLQGMGYIAYLKDRRLSGGAVPSASMTRLARSRTASLTSASSVDGSRPQACTHSESSEGLGQVNHTMEVSC.

Phosphoserine occurs at positions 298, 317, and 323. Residues 314-323 (RTASLTSASS) show a composition bias toward low complexity. The tract at residues 314-352 (RTASLTSASSVDGSRPQACTHSESSEGLGQVNHTMEVSC) is disordered. The span at 330-352 (QACTHSESSEGLGQVNHTMEVSC) shows a compositional bias: polar residues.

Belongs to the NDRG family. Phosphorylated in an aortic smooth muscle cell line, following PDGF treatment. As to expression, expressed predominantly in brain and heart (at protein level). In the brain, detected in astrocytes. Isoform 1 and isoform 2 are only expressed in brain. Isoform 3 is expressed in both heart and brain. Up-regulated in glioblastoma multiforme cells.

It localises to the cytoplasm. Its subcellular location is the cytosol. Functionally, contributes to the maintenance of intracerebral BDNF levels within the normal range, which is necessary for the preservation of spatial learning and the resistance to neuronal cell death caused by ischemic stress. May enhance growth factor-induced ERK1 and ERK2 phosphorylation, including that induced by PDGF and FGF. May attenuate NGF-promoted ELK1 phosphorylation in a microtubule-dependent manner. This chain is Protein NDRG4 (NDRG4), found in Homo sapiens (Human).